Here is a 485-residue protein sequence, read N- to C-terminus: MKKQPQKTLLAIALSVVSGTAMSHGYVSAVENGVAEARVTLCKFAASTGEKNTNCGAIQYEPQSVEGPDGFPASGPRDGKIASAESALANALDEQTADRWVKRPIQAGAQNFEWTFTANHVTKDWKYYITKPDWNPNQPLARASFDLTPFCVVDGGMVQPPKRVSHTCNVPEREGYQVILAVWDVGDTAASFYNVIDVKFDGDGPALPDWQQGGQIIPTMNLNVGDTVFTRVFDLAGENPAYTTELAIDSDALTVANNWSHALAVKINQTQSEIAAGQLNEQNQFVPVYGTNPIFLKSGSNLQRVEIGYKIETPAPEYDVTLSGLASEYQIGDAPVTLDLGLQATGDITTELTIYNHHKEPLAFETVAMTDGENKAVSMTLSKSEAGHHMLVTKVLDKDGTLQKQQTSDFMLTETQTPPPSDDYDFVFPDGLSSYTADTKVLASDGAIYQCKPFPYSGYCVQWTPTATQYQPGTGSHWQMAWDKL.

A signal peptide spans 1–29 (MKKQPQKTLLAIALSVVSGTAMSHGYVSA). The Chitin-binding type-4 domain occupies 30 to 200 (VENGVAEARV…SFYNVIDVKF (171 aa)). The Chitin-binding type-3 domain maps to 437 to 478 (ADTKVLASDGAIYQCKPFPYSGYCVQWTPTATQYQPGTGSHW).

Belongs to the GbpA family.

The protein localises to the secreted. In terms of biological role, probably interacts with GlcNAc residues. May promote attachment to both epithelial cell surfaces and chitin. This chain is GlcNAc-binding protein A, found in Vibrio vulnificus (strain CMCP6).